A 303-amino-acid polypeptide reads, in one-letter code: Glutamyl-Q tRNA(Asp) synthetase (303 aa).

L-glutamate-binding positions include 16-20 (RFAPS) and glutamate 52. The short motif at 19–29 (PSPSGPLHFGS) is the 'HIGH' region element. Cysteine 108, cysteine 110, tyrosine 122, and cysteine 126 together coordinate Zn(2+). Residues tyrosine 177 and arginine 195 each contribute to the L-glutamate site. The 'KMSKS' region motif lies at 233–237 (KLSKQ). Residue lysine 236 participates in ATP binding.

The protein belongs to the class-I aminoacyl-tRNA synthetase family. GluQ subfamily. It depends on Zn(2+) as a cofactor.

In terms of biological role, catalyzes the tRNA-independent activation of glutamate in presence of ATP and the subsequent transfer of glutamate onto a tRNA(Asp). Glutamate is transferred on the 2-amino-5-(4,5-dihydroxy-2-cyclopenten-1-yl) moiety of the queuosine in the wobble position of the QUC anticodon. This Vibrio vulnificus (strain CMCP6) protein is Glutamyl-Q tRNA(Asp) synthetase.